Reading from the N-terminus, the 346-residue chain is Biotin synthase (346 aa).

The Radical SAM core domain occupies 38–256 (KQIQVSTLLS…IAVARIMMPT (219 aa)). [4Fe-4S] cluster-binding residues include C53, C57, and C60. Positions 97, 128, 188, and 260 each coordinate [2Fe-2S] cluster.

Belongs to the radical SAM superfamily. Biotin synthase family. In terms of assembly, homodimer. [4Fe-4S] cluster is required as a cofactor. The cofactor is [2Fe-2S] cluster.

It carries out the reaction (4R,5S)-dethiobiotin + (sulfur carrier)-SH + 2 reduced [2Fe-2S]-[ferredoxin] + 2 S-adenosyl-L-methionine = (sulfur carrier)-H + biotin + 2 5'-deoxyadenosine + 2 L-methionine + 2 oxidized [2Fe-2S]-[ferredoxin]. The protein operates within cofactor biosynthesis; biotin biosynthesis; biotin from 7,8-diaminononanoate: step 2/2. Its function is as follows. Catalyzes the conversion of dethiobiotin (DTB) to biotin by the insertion of a sulfur atom into dethiobiotin via a radical-based mechanism. This Salmonella arizonae (strain ATCC BAA-731 / CDC346-86 / RSK2980) protein is Biotin synthase.